The primary structure comprises 224 residues: 4-aminobenzoate synthase (224 aa).

6 residues coordinate Fe(2+): Glu77, His84, Glu138, His169, Asp173, and His176.

Belongs to the CADD family. As to quaternary structure, homodimer. Requires Fe(2+) as cofactor. Mn(2+) is required as a cofactor.

Functionally, involved in de novo para-aminobenzoate (PABA) biosynthesis. Acts as a self-sacrificing or 'suicide' enzyme that utilizes its own active site tyrosine residue(s) as the substrate for PABA synthesis. The side chain of the tyrosine residue is released from the protein backbone via cleavage of the C(alpha)-C(beta) bond, leaving a glycine in place of the original tyrosine residue. Reaction requires O(2) and a reduced dimetal cofactor. The protein is 4-aminobenzoate synthase of Chlamydia pneumoniae (Chlamydophila pneumoniae).